We begin with the raw amino-acid sequence, 673 residues long: Fatty acyl-CoA synthetase B (673 aa).

An N-terminal signal peptide occupies residues 1 to 18; the sequence is MINNWLAVGLLVVSGILA. N-linked (GlcNAc...) asparagine glycosylation occurs at Asn267.

It belongs to the ATP-dependent AMP-binding enzyme family.

It is found in the endoplasmic reticulum. It carries out the reaction a long-chain fatty acid + ATP + CoA = a long-chain fatty acyl-CoA + AMP + diphosphate. Long chain fatty acid acyl-CoA synthetases catalyze the formation of a thiester bond between a free fatty acid and coenzyme A during fatty acid metabolic process. This is Fatty acyl-CoA synthetase B (fcsB) from Dictyostelium discoideum (Social amoeba).